The following is a 972-amino-acid chain: Structural polyprotein (972 aa).

Aspartate 26 provides a ligand contact to a divalent metal cation. Residues 509-734 (SGGPDGKFSR…YLGELMASNA (226 aa)) form the Peptidase S50 domain. Residue serine 633 is the Nucleophile of the active site. Lysine 674 is an active-site residue. Disordered stretches follow at residues 794-817 (KLISTPPKHPEKPKGPDQHHAQEA) and 916-972 (NGGR…NAEV). Residues 801–817 (KHPEKPKGPDQHHAQEA) show a composition bias toward basic and acidic residues. Positions 963 to 972 (FTPSGDNAEV) are enriched in polar residues.

As to quaternary structure, homotrimer. A central divalent metal (possibly cobalt) stabilizes the VP2 trimer. In terms of assembly, homodimer. interacts (via C-terminus) with VP1 in the cytoplasm. Interacts with VP2. Specific enzymatic cleavages yield mature proteins. The capsid assembly seems to be regulated by polyprotein processing. The protease VP4 cleaves itself off the polyprotein, thus releasing pre-VP2 and VP3 within the infected cell. During capsid assembly, the C-terminus of pre-VP2 is further processed by VP4, giving rise to VP2, the external capsid protein and three small peptides that all stay closely associated with the capsid.

The protein localises to the virion. It localises to the host cytoplasm. Functionally, capsid protein VP2 self assembles to form an icosahedral capsid with a T=13 symmetry, about 70 nm in diameter, and consisting of 260 VP2 trimers. The capsid encapsulates the genomic dsRNA. VP2 is also involved in attachment and entry into the host cell. Its function is as follows. The precursor of VP2 plays an important role in capsid assembly. First, pre-VP2 and VP2 oligomers assemble to form a procapsid. Then, the pre-VP2 intermediates may be processed into VP2 proteins by proteolytic cleavage mediated by VP4 to obtain the mature virion. The final capsid is composed of pentamers and hexamers but VP2 has a natural tendency to assemble into all-pentameric structures. Therefore pre-VP2 may be required to allow formation of the hexameric structures. In terms of biological role, protease VP4 is a serine protease that cleaves the polyprotein into its final products. Pre-VP2 is first partially cleaved, and may be completely processed by VP4 upon capsid maturation. Capsid protein VP3 plays a key role in virion assembly by providing a scaffold for the capsid made of VP2. May self-assemble to form a T=4-like icosahedral inner-capsid composed of at least 180 trimers. Plays a role in genomic RNA packaging by recruiting VP1 into the capsid and interacting with the dsRNA genome segments to form a ribonucleoprotein complex. Additionally, the interaction of the VP3 C-terminal tail with VP1 removes the inherent structural blockade of the polymerase active site. Thus, VP3 can also function as a transcriptional activator. Functionally, structural peptide 1 is a small peptide derived from pre-VP2 C-terminus. It destabilizes and perforates cell membranes, suggesting a role during entry. Its function is as follows. Structural peptide 2 is a small peptide derived from pVP2 C-terminus. It is not essential for the virus viability, but viral growth is affected when missing. In terms of biological role, structural peptide 3 is a small peptide derived from pVP2 C-terminus. It is not essential for the virus viability, but viral growth is affected when missing. In Infectious pancreatic necrosis virus (strain Sp) (IPNV), this protein is Structural polyprotein.